Consider the following 295-residue polypeptide: CRISPR system Cmr endoribonuclease Cmr4 (295 aa).

It belongs to the CRISPR system Cmr4 family. In terms of assembly, forms oligomers in isolation. Part of the type III-B Cmr ribonucleoprotein (RNP) complex, an elongated RNP with Cmr2 and Cmr3 as the base, with Cmr4 and Cmr5 forming a helical core along the mature crRNA (39 or 45 nt in length), while the complex is capped by Cmr6 and Cmr1. The 5' end of the crRNA is bound to Cmr2 and Cmr3, while Cmr6 and a Cmr1 subunit (Cmr1-1 or Cmr1-2) cap the 3' end of the crRNA. The target RNA lies anti-parallel to the crRNA, with its 5' end near Cmr1 and Cmr6 and its 3' end near Cmr2 and Cmr3; major target RNA cleavage occurs nears the junction of Cmr1/Cmr6 and Cmr4/Cmr5, with minor cleavage occurring at 6 nt intervals which coincide with the proposed spacing of Cmr4 subunits. Interacts with Cmr5. Interacts with Cmr2, Cmr3, Cmr5 and Cmr6.

The protein localises to the cytoplasm. Its function is as follows. CRISPR (clustered regularly interspaced short palindromic repeat), is an adaptive immune system that provides protection against mobile genetic elements (viruses, transposable elements and conjugative plasmids). CRISPR clusters contain sequences complementary to antecedent mobile elements and target invading nucleic acids. CRISPR clusters are transcribed and processed into CRISPR RNA (crRNA), formerly called psiRNA (prokaryotic silencing) in this organism. Part of the Cmr ribonucleoprotein complex which has divalent cation-dependent endoribonuclease activity specific for ssRNA complementary to the crRNA (target RNA), generating 5' hydroxy- and 3' phosphate or 2'-3' cyclic phosphate termini. This is probably the subunit that cleaves the target RNA. Cmr complex does not cleave ssDNA complementary to the crRNA. Cleavage of target RNA is guided by the crRNA; substrate cleavage occurs a fixed distance (14 nt) from the 3' end of the crRNA. In vitro reconstitution shows Cmr1-2 and Cmr5 are not absolutely necessary for target cleavage. The protein is CRISPR system Cmr endoribonuclease Cmr4 of Pyrococcus furiosus (strain ATCC 43587 / DSM 3638 / JCM 8422 / Vc1).